We begin with the raw amino-acid sequence, 232 residues long: Phosphatidylserine decarboxylase proenzyme (232 aa).

The active-site Schiff-base intermediate with substrate; via pyruvic acid is the Ser190. Position 190 is a pyruvic acid (Ser); by autocatalysis (Ser190).

This sequence belongs to the phosphatidylserine decarboxylase family. PSD-A subfamily. As to quaternary structure, heterodimer of a large membrane-associated beta subunit and a small pyruvoyl-containing alpha subunit. The cofactor is pyruvate. Post-translationally, is synthesized initially as an inactive proenzyme. Formation of the active enzyme involves a self-maturation process in which the active site pyruvoyl group is generated from an internal serine residue via an autocatalytic post-translational modification. Two non-identical subunits are generated from the proenzyme in this reaction, and the pyruvate is formed at the N-terminus of the alpha chain, which is derived from the carboxyl end of the proenzyme. The post-translation cleavage follows an unusual pathway, termed non-hydrolytic serinolysis, in which the side chain hydroxyl group of the serine supplies its oxygen atom to form the C-terminus of the beta chain, while the remainder of the serine residue undergoes an oxidative deamination to produce ammonia and the pyruvoyl prosthetic group on the alpha chain.

The protein localises to the cell membrane. It catalyses the reaction a 1,2-diacyl-sn-glycero-3-phospho-L-serine + H(+) = a 1,2-diacyl-sn-glycero-3-phosphoethanolamine + CO2. Its pathway is phospholipid metabolism; phosphatidylethanolamine biosynthesis; phosphatidylethanolamine from CDP-diacylglycerol: step 2/2. In terms of biological role, catalyzes the formation of phosphatidylethanolamine (PtdEtn) from phosphatidylserine (PtdSer). This is Phosphatidylserine decarboxylase proenzyme from Rhodopseudomonas palustris (strain HaA2).